We begin with the raw amino-acid sequence, 393 residues long: NAD(P)H-quinone oxidoreductase subunit H, chloroplastic (393 aa).

Belongs to the complex I 49 kDa subunit family. NDH is composed of at least 16 different subunits, 5 of which are encoded in the nucleus.

The protein localises to the plastid. It localises to the chloroplast thylakoid membrane. It catalyses the reaction a plastoquinone + NADH + (n+1) H(+)(in) = a plastoquinol + NAD(+) + n H(+)(out). The enzyme catalyses a plastoquinone + NADPH + (n+1) H(+)(in) = a plastoquinol + NADP(+) + n H(+)(out). In terms of biological role, NDH shuttles electrons from NAD(P)H:plastoquinone, via FMN and iron-sulfur (Fe-S) centers, to quinones in the photosynthetic chain and possibly in a chloroplast respiratory chain. The immediate electron acceptor for the enzyme in this species is believed to be plastoquinone. Couples the redox reaction to proton translocation, and thus conserves the redox energy in a proton gradient. This chain is NAD(P)H-quinone oxidoreductase subunit H, chloroplastic, found in Carica papaya (Papaya).